The chain runs to 1161 residues: DNA-directed RNA polymerase subunit beta (1161 aa).

The protein belongs to the RNA polymerase beta chain family. The RNAP catalytic core consists of 2 alpha, 1 beta, 1 beta' and 1 omega subunit. When a sigma factor is associated with the core the holoenzyme is formed, which can initiate transcription. The RNAP complex including the principal sigma factor HrdB also interacts with RNA-binding protein RbpA.

It carries out the reaction RNA(n) + a ribonucleoside 5'-triphosphate = RNA(n+1) + diphosphate. Its function is as follows. DNA-dependent RNA polymerase catalyzes the transcription of DNA into RNA using the four ribonucleoside triphosphates as substrates. In Streptomyces coelicolor (strain ATCC BAA-471 / A3(2) / M145), this protein is DNA-directed RNA polymerase subunit beta.